Here is a 148-residue protein sequence, read N- to C-terminus: Large ribosomal subunit protein bL9 (148 aa).

This sequence belongs to the bacterial ribosomal protein bL9 family.

Its function is as follows. Binds to the 23S rRNA. The chain is Large ribosomal subunit protein bL9 from Leptospira biflexa serovar Patoc (strain Patoc 1 / Ames).